The chain runs to 502 residues: Phenylacetaldehyde dehydrogenase (502 aa).

NAD(+) is bound at residue 251-256 (GSTEVG). Residues Glu273 and Cys307 contribute to the active site.

The protein belongs to the aldehyde dehydrogenase family.

The enzyme catalyses 2-phenylacetaldehyde + NAD(+) + H2O = 2-phenylacetate + NADH + 2 H(+). Its pathway is aromatic compound metabolism. Functionally, phenylacetaldehyde dehydrogenase that catalyzes the last step in the aerobic styrene degradation pathway by mediating oxidation of phenylacetaldehyde to phenylacetic acid. The sequence is that of Phenylacetaldehyde dehydrogenase (styD) from Pseudomonas fluorescens.